The sequence spans 833 residues: Ribosome biogenesis protein BOP1 homolog (833 aa).

The segment at 20-202 is disordered; that stretch reads NKKSEPIAVS…DSDDSSEDES (183 aa). A compositionally biased stretch (low complexity) spans 36–56; the sequence is SKPTTTATTTVSKSPVSTITT. Composition is skewed to acidic residues over residues 90–111 and 136–150; these read SEDD…EDVE and EAEE…EDDS. Low complexity predominate over residues 154-170; sequence SSKSSSSTTTTTTTTKK. The span at 182-192 shows a compositional bias: polar residues; the sequence is KQWTNDPNQFY. The span at 193 to 202 shows a compositional bias: acidic residues; the sequence is DSDDSSEDES. WD repeat units follow at residues 331–370, 488–527, and 529–569; these read TKAI…KEKT, GHKA…CLYS, and EVES…TQTE. Residues 568–592 are disordered; it reads TEHSPETEKILTKPPTDSSTEQQQN. A compositionally biased stretch (polar residues) spans 582-592; it reads PTDSSTEQQQN. 5 WD repeats span residues 618 to 660, 663 to 701, 704 to 743, 747 to 786, and 802 to 833; these read HHPF…TQSP, KSKT…LIKK, TGCR…RPYK, YHKM…DLLQ, and INDL…LYTN.

It belongs to the WD repeat BOP1/ERB1 family.

It localises to the nucleus. The protein localises to the nucleolus. It is found in the nucleoplasm. Functionally, required for maturation of ribosomal RNAs and formation of the large ribosomal subunit. The protein is Ribosome biogenesis protein BOP1 homolog of Dictyostelium discoideum (Social amoeba).